Reading from the N-terminus, the 109-residue chain is Large ribosomal subunit protein uL22 (109 aa).

The protein belongs to the universal ribosomal protein uL22 family. As to quaternary structure, part of the 50S ribosomal subunit.

Functionally, this protein binds specifically to 23S rRNA; its binding is stimulated by other ribosomal proteins, e.g. L4, L17, and L20. It is important during the early stages of 50S assembly. It makes multiple contacts with different domains of the 23S rRNA in the assembled 50S subunit and ribosome. In terms of biological role, the globular domain of the protein is located near the polypeptide exit tunnel on the outside of the subunit, while an extended beta-hairpin is found that lines the wall of the exit tunnel in the center of the 70S ribosome. The protein is Large ribosomal subunit protein uL22 of Cupriavidus taiwanensis (strain DSM 17343 / BCRC 17206 / CCUG 44338 / CIP 107171 / LMG 19424 / R1) (Ralstonia taiwanensis (strain LMG 19424)).